The following is a 155-amino-acid chain: Small ribosomal subunit protein uS7 (155 aa).

The protein belongs to the universal ribosomal protein uS7 family. As to quaternary structure, part of the 30S ribosomal subunit. Contacts proteins S9 and S11.

Its function is as follows. One of the primary rRNA binding proteins, it binds directly to 16S rRNA where it nucleates assembly of the head domain of the 30S subunit. Is located at the subunit interface close to the decoding center, probably blocks exit of the E-site tRNA. This Kosmotoga olearia (strain ATCC BAA-1733 / DSM 21960 / TBF 19.5.1) protein is Small ribosomal subunit protein uS7.